The chain runs to 211 residues: Small ribosomal subunit protein uS4 (211 aa).

Residues 27 to 48 (GRKVLERRGSQPPGQHGASVRR) are disordered. The region spanning 99–162 (RRLDNVVFRL…RKRDYFKDLE (64 aa)) is the S4 RNA-binding domain.

The protein belongs to the universal ribosomal protein uS4 family. Part of the 30S ribosomal subunit. Contacts protein S5. The interaction surface between S4 and S5 is involved in control of translational fidelity.

In terms of biological role, one of the primary rRNA binding proteins, it binds directly to 16S rRNA where it nucleates assembly of the body of the 30S subunit. With S5 and S12 plays an important role in translational accuracy. The chain is Small ribosomal subunit protein uS4 from Herpetosiphon aurantiacus (strain ATCC 23779 / DSM 785 / 114-95).